A 660-amino-acid chain; its full sequence is Arginine--tRNA ligase, cytoplasmic (660 aa).

Met1 carries the N-acetylmethionine modification. Residues 1–72 are could be involved in the assembly of the multisynthetase complex; sequence MDGLVAQCSA…QEERRKPTKN (72 aa). Residues 200–202, His211, Tyr384, Asp388, and Gln412 contribute to the L-arginine site; that span reads SPN. A 'HIGH' region motif is present at residues 201 to 212; it reads PNIAKEMHVGHL. Residues 529-543 are interaction with tRNA; it reads NTAAYLLYAFTRIRS.

The protein belongs to the class-I aminoacyl-tRNA synthetase family. In terms of assembly, interacts (via N-terminus) with AIMP1 (via N-terminus); this stimulates its catalytic activity. Interacts (via N-terminus) with LARS2 (via C-terminus). Monomer. Part of a multisubunit complex that groups tRNA ligases for Arg (RARS1), Asp (DARS1), Gln (QARS1), Ile (IARS1), Leu (LARS1), Lys (KARS1), Met (MARS1) the bifunctional ligase for Glu and Pro (EPRS1) and the auxiliary subunits AIMP1/p43, AIMP2/p38 and EEF1E1/p18. Interacts with QARS1. Part of a complex composed of RARS1, QARS1 and AIMP1.

Its subcellular location is the cytoplasm. It is found in the cytosol. The catalysed reaction is tRNA(Arg) + L-arginine + ATP = L-arginyl-tRNA(Arg) + AMP + diphosphate. Its function is as follows. Forms part of a macromolecular complex that catalyzes the attachment of specific amino acids to cognate tRNAs during protein synthesis. Modulates the secretion of AIMP1 and may be involved in generation of the inflammatory cytokine EMAP2 from AIMP1. The polypeptide is Arginine--tRNA ligase, cytoplasmic (Rars1) (Mus musculus (Mouse)).